Consider the following 248-residue polypeptide: Pulmonary surfactant-associated protein A (248 aa).

The signal sequence occupies residues 1-20 (MLLCSLTLTLLWMVASGLEC). The Collagen-like domain maps to 28–100 (GSPGIPGTPG…PGERGPPGFP (73 aa)). Residues 29–102 (SPGIPGTPGS…ERGPPGFPAY (74 aa)) form a disordered region. 9 positions are modified to 4-hydroxyproline: Pro-30, Pro-33, Pro-36, Pro-42, Pro-54, Pro-57, Pro-63, Pro-67, and Pro-70. A compositionally biased stretch (basic and acidic residues) spans 42 to 51 (PGRDGRDGIK). The segment covering 54-65 (PGPPGPMGPPGG) has biased composition (pro residues). Low complexity predominate over residues 69-82 (LPGRDGMTGAPGLP). The span at 84–93 (ERGEKGEPGE) shows a compositional bias: basic and acidic residues. Residues 132–248 (LAVGEKVFST…LQYRLAICEF (117 aa)) form the C-type lectin domain. 2 cysteine pairs are disulfide-bonded: Cys-155–Cys-246 and Cys-224–Cys-238. An N-linked (GlcNAc...) asparagine glycan is attached at Asn-207. 4 residues coordinate Ca(2+): Glu-215, Arg-217, Asn-234, and Asp-235.

This sequence belongs to the SFTPA family. As to quaternary structure, oligomeric complex of 6 set of homotrimers.

The protein resides in the secreted. It localises to the extracellular space. Its subcellular location is the extracellular matrix. It is found in the surface film. Its function is as follows. In presence of calcium ions, it binds to surfactant phospholipids and contributes to lower the surface tension at the air-liquid interface in the alveoli of the mammalian lung and is essential for normal respiration. Enhances the expression of MYO18A/SP-R210 on alveolar macrophages. This Bos taurus (Bovine) protein is Pulmonary surfactant-associated protein A (SFTPA1).